A 486-amino-acid chain; its full sequence is Ribosomal RNA small subunit methyltransferase F (486 aa).

S-adenosyl-L-methionine is bound by residues A124 to K130, E148, D175, and D193. The Nucleophile role is filled by C246.

This sequence belongs to the class I-like SAM-binding methyltransferase superfamily. RsmB/NOP family.

It localises to the cytoplasm. The enzyme catalyses cytidine(1407) in 16S rRNA + S-adenosyl-L-methionine = 5-methylcytidine(1407) in 16S rRNA + S-adenosyl-L-homocysteine + H(+). Functionally, specifically methylates the cytosine at position 1407 (m5C1407) of 16S rRNA. The polypeptide is Ribosomal RNA small subunit methyltransferase F (Shewanella baltica (strain OS195)).